A 380-amino-acid polypeptide reads, in one-letter code: Histidinol-phosphate aminotransferase 1 (380 aa).

At Lys235 the chain carries N6-(pyridoxal phosphate)lysine.

The protein belongs to the class-II pyridoxal-phosphate-dependent aminotransferase family. Histidinol-phosphate aminotransferase subfamily. As to quaternary structure, homodimer. It depends on pyridoxal 5'-phosphate as a cofactor.

It catalyses the reaction L-histidinol phosphate + 2-oxoglutarate = 3-(imidazol-4-yl)-2-oxopropyl phosphate + L-glutamate. It functions in the pathway amino-acid biosynthesis; L-histidine biosynthesis; L-histidine from 5-phospho-alpha-D-ribose 1-diphosphate: step 7/9. The sequence is that of Histidinol-phosphate aminotransferase 1 from Psychrobacter arcticus (strain DSM 17307 / VKM B-2377 / 273-4).